The chain runs to 735 residues: MAAGGAVAAAPECRLLPYALHKWSSFSSTYLPENILVDKPNDQSSRWSSESNYPPQYLILKLERPAIVQNITFGKYEKTHVCNLKKFKVFGGMNEENMTELLSSGLKNDYNKETFTLKHKIDEQMFPCRFIKIVPLLSWGPSFNFSIWYVELSGIDDPDIVQPCLNWYSKYREQEAIRLCLKHFRQHNYTEAFESLQKKTKIALEHPMLTDMHDKLVLKGDFDACEELIEKAVNDGLFNQYISQQEYKPRWSQIIPKSTKGDGEDNRPGMRGGHQMVIDVQTETVYLFGGWDGTQDLADFWAYSVKENQWTCISRDTEKENGPSARSCHKMCIDIQRRQIYTLGRYLDSSVRNSKSLKSDFYRYDIDTNTWMLLSEDTAADGGPKLVFDHQMCMDSEKHMIYTFGGRILTCNGSVDDSRASEPQFSGLFAFNCQCQTWKLLREDSCNAGPEDIQSRIGHCMLFHSKNRCLYVFGGQRSKTYLNDFFSYDVDSDHVDIISDGTKKDSGMVPMTGFTQRATIDPELNEIHVLSGLSKDKEKREENVRNSFWIYDIVRNSWSCVYKNDQAAKENLSKSLQEEEPCPRFAHQLVYDELHKVHYLFGGNPGKSCSPKMRLDDFWSLKLCRPSKDYLLRHCKYLIRKHRFEEKAQMDPLSALKYLQNDLYITVDHSDPEETKEFQLLASALFKSGSDFTALGFSDVDHTYAQRTQLFDTLVNFFPDSMTPPKGNLVDLITL.

Ala2 carries the post-translational modification N-acetylalanine. A LisH domain is found at 172–204 (REQEAIRLCLKHFRQHNYTEAFESLQKKTKIAL). The 53-residue stretch at 206–258 (HPMLTDMHDKLVLKGDFDACEELIEKAVNDGLFNQYISQQEYKPRWSQIIPKS) folds into the CTLH domain. 6 Kelch repeats span residues 284–330 (TVYL…SCHK), 339–391 (QIYT…FDHQ), 400–458 (MIYT…SRIG), 469–515 (CLYV…TGFT), 526–578 (EIHV…SLQE), and 597–651 (VHYL…AQMD).

As to quaternary structure, homodimer; may form higher oligomers. Identified in the CTLH complex that contains GID4, RANBP9 and/or RANBP10, MKLN1, MAEA, RMND5A (or alternatively its paralog RMND5B), GID8, ARMC8, WDR26 and YPEL5. Within this complex, MAEA, RMND5A (or alternatively its paralog RMND5B), GID8, WDR26, and RANBP9 and/or RANBP10 form the catalytic core, while GID4, MKLN1, ARMC8 and YPEL5 have ancillary roles. Interacts with RANBP9. Part of a complex consisting of RANBP9, MKLN1 and GID8. Interacts with GABRA1. Interacts with the C-terminal tail of PTGER3.

It is found in the cytoplasm. The protein localises to the cell projection. It localises to the ruffle. Its subcellular location is the cell cortex. The protein resides in the synapse. It is found in the postsynapse. Its function is as follows. Component of the CTLH E3 ubiquitin-protein ligase complex that selectively accepts ubiquitin from UBE2H and mediates ubiquitination and subsequent proteasomal degradation of the transcription factor HBP1. Required for internalization of the GABA receptor GABRA1 from the cell membrane via endosomes and subsequent GABRA1 degradation. Acts as a mediator of cell spreading and cytoskeletal responses to the extracellular matrix component THBS1. The sequence is that of Muskelin (Mkln1) from Rattus norvegicus (Rat).